Consider the following 360-residue polypeptide: Fe(3+) ions import ATP-binding protein FbpC (360 aa).

Positions 4-236 constitute an ABC transporter domain; that stretch reads LEIKGLHKHY…PKDRMIAEFL (233 aa). An ATP-binding site is contributed by 36–43; that stretch reads GPSGCGKT.

The protein belongs to the ABC transporter superfamily. Fe(3+) ion importer (TC 3.A.1.10) family. As to quaternary structure, the complex is composed of two ATP-binding proteins (FbpC), two transmembrane proteins (FbpB) and a solute-binding protein (FbpA).

Its subcellular location is the cell inner membrane. The catalysed reaction is Fe(3+)(out) + ATP + H2O = Fe(3+)(in) + ADP + phosphate + H(+). Functionally, part of the ABC transporter complex FbpABC involved in Fe(3+) ions import. Responsible for energy coupling to the transport system. The polypeptide is Fe(3+) ions import ATP-binding protein FbpC (Mesorhizobium japonicum (strain LMG 29417 / CECT 9101 / MAFF 303099) (Mesorhizobium loti (strain MAFF 303099))).